The chain runs to 297 residues: MKNLALIDLFLNEYWIEKGLSENTVQSYRLDLTALCDWLDKNDLSLETLDAVDLQGFLGERLEKGYKATSTARMLSAMRKLFQYLYREKYRVDDPSAVLSSPKLPSRLPKYLTEQQVSDLLNTPNVEVPLELRDKAMLELLYATGLRVTELVSLTIENMSVQQGVVRVIGKGNKERIVPMGEEAAYWVRQFMLYGRPVLLNGQSSDVVFPSQRAQQMTRQTFWHRVKHYAILADIDADALSPHVLRHAFATHLVNHGADLRVVQMLLGHTDLSTTQIYTHVAKERLKRLHERFHPRG.

A Core-binding (CB) domain is found at 1–86 (MKNLALIDLF…AMRKLFQYLY (86 aa)). The 185-residue stretch at 107–291 (RLPKYLTEQQ…AKERLKRLHE (185 aa)) folds into the Tyr recombinase domain. Catalysis depends on residues Arg-147, Lys-171, His-243, Arg-246, and His-269. The active-site O-(3'-phospho-DNA)-tyrosine intermediate is Tyr-278.

The protein belongs to the 'phage' integrase family. XerD subfamily. As to quaternary structure, forms a cyclic heterotetrameric complex composed of two molecules of XerC and two molecules of XerD.

It localises to the cytoplasm. Site-specific tyrosine recombinase, which acts by catalyzing the cutting and rejoining of the recombining DNA molecules. The XerC-XerD complex is essential to convert dimers of the bacterial chromosome into monomers to permit their segregation at cell division. It also contributes to the segregational stability of plasmids. The chain is Tyrosine recombinase XerD from Haemophilus influenzae (strain ATCC 51907 / DSM 11121 / KW20 / Rd).